The chain runs to 71 residues: Biotinylated protein TB7.3 (71 aa).

A Biotinyl-binding domain is found at 2–71 (AEDVRAEIVA…QAGDLIAVIS (70 aa)). N6-biotinyllysine is present on Lys-37.

The protein is Biotinylated protein TB7.3 of Mycobacterium bovis (strain ATCC BAA-935 / AF2122/97).